The chain runs to 236 residues: MPTDMEHTGHYLHLAFLMTTVFSLSPGTKANYTRLWANSTSSWDSVIQNKTGRNQNENINTNPITPEVDYKGNSTNMPETSHIVALTSKSEQELYIPSVVSNSPSTVQSIENTSKSHGEIFKKDVCAENNNNMAMLICLIIIAVLFLICTFLFLSTVVLANKVSSLRRSKQVGKRQPRSNGDFLASGLWPAESDTWKRTKQLTGPNLVMQSTGVLTATRERKDEEGTEKLTNKQIG.

Residues 1–30 (MPTDMEHTGHYLHLAFLMTTVFSLSPGTKA) form the signal peptide. N-linked (GlcNAc...) asparagine glycans are attached at residues Asn31, Asn38, Asn49, Asn73, and Asn112. Topologically, residues 31–133 (NYTRLWANST…DVCAENNNNM (103 aa)) are extracellular. Residues 134–154 (AMLICLIIIAVLFLICTFLFL) traverse the membrane as a helical segment. The Cytoplasmic segment spans residues 155–236 (STVVLANKVS…TEKLTNKQIG (82 aa)). Position 211 is a phosphoserine (Ser211). A disordered region spans residues 217-236 (ATRERKDEEGTEKLTNKQIG). Residues 218-236 (TRERKDEEGTEKLTNKQIG) show a composition bias toward basic and acidic residues.

It belongs to the EVI2A family.

The protein localises to the membrane. Its function is as follows. May complex with itself or/and other proteins within the membrane, to function as part of a cell-surface receptor. This Homo sapiens (Human) protein is Protein EVI2A (EVI2A).